Reading from the N-terminus, the 269-residue chain is Zinc transporter ZupT (269 aa).

The next 8 helical transmembrane spans lie at 5 to 25 (VLLAFGLTLFAGLATGVGSLI), 38 to 58 (SLALGFSAGVMIYVSLVEIFV), 75 to 95 (WMTIAGFFGGMLFIALIDKFI), 125 to 145 (MGIFTALAIGIHNFPEGIATF), 158 to 178 (IAIAVAIHNIPEGIAVSVPIF), 190 to 210 (LSFLSGLAEPVGALVAFLLLM), 212 to 232 (FLTDVMFGIIFAGVAGIMVFI), and 249 to 269 (LSMYGLVGGMAVMAISLVLLV). Positions 137 and 140 each coordinate Fe(2+). 2 residues coordinate Zn(2+): Glu-140 and His-165. 3 residues coordinate Fe(2+): Asn-166, Glu-169, and Glu-198. Glu-169 serves as a coordination point for Zn(2+).

This sequence belongs to the ZIP transporter (TC 2.A.5) family. ZupT subfamily.

Its subcellular location is the cell membrane. It catalyses the reaction Zn(2+)(in) = Zn(2+)(out). Mediates zinc uptake. May also transport other divalent cations. This is Zinc transporter ZupT from Lysinibacillus sphaericus (strain C3-41).